The sequence spans 92 residues: Small ribosomal subunit protein uS19 (92 aa).

This sequence belongs to the universal ribosomal protein uS19 family.

In terms of biological role, protein S19 forms a complex with S13 that binds strongly to the 16S ribosomal RNA. The chain is Small ribosomal subunit protein uS19 from Bifidobacterium adolescentis (strain ATCC 15703 / DSM 20083 / NCTC 11814 / E194a).